A 249-amino-acid chain; its full sequence is Ubiquinone/menaquinone biosynthesis C-methyltransferase UbiE (249 aa).

Residues Thr72, Asp93, and Asn121–Ala122 each bind S-adenosyl-L-methionine.

This sequence belongs to the class I-like SAM-binding methyltransferase superfamily. MenG/UbiE family.

It carries out the reaction a 2-demethylmenaquinol + S-adenosyl-L-methionine = a menaquinol + S-adenosyl-L-homocysteine + H(+). It catalyses the reaction a 2-methoxy-6-(all-trans-polyprenyl)benzene-1,4-diol + S-adenosyl-L-methionine = a 5-methoxy-2-methyl-3-(all-trans-polyprenyl)benzene-1,4-diol + S-adenosyl-L-homocysteine + H(+). Its pathway is quinol/quinone metabolism; menaquinone biosynthesis; menaquinol from 1,4-dihydroxy-2-naphthoate: step 2/2. It functions in the pathway cofactor biosynthesis; ubiquinone biosynthesis. In terms of biological role, methyltransferase required for the conversion of demethylmenaquinol (DMKH2) to menaquinol (MKH2) and the conversion of 2-polyprenyl-6-methoxy-1,4-benzoquinol (DDMQH2) to 2-polyprenyl-3-methyl-6-methoxy-1,4-benzoquinol (DMQH2). The polypeptide is Ubiquinone/menaquinone biosynthesis C-methyltransferase UbiE (Hahella chejuensis (strain KCTC 2396)).